The sequence spans 199 residues: uncharacterized protein (199 aa).

The protein resides in the mitochondrion. This is an uncharacterized protein from Schizosaccharomyces pombe (strain 972 / ATCC 24843) (Fission yeast).